Reading from the N-terminus, the 1472-residue chain is Type IV pilus biogenesis factor PilY1 homolog PD_1611 (1472 aa).

Ca(2+)-binding residues include aspartate 1170, aspartate 1172, aspartate 1174, leucine 1176, and aspartate 1178. The span at 1383-1397 (RGSRSSIGNSDTGAV) shows a compositional bias: polar residues. Residues 1383-1403 (RGSRSSIGNSDTGAVSTGGDA) are disordered.

It belongs to the PilY1 family.

Its subcellular location is the fimbrium. In terms of biological role, one of the three PilY1 homologs of X.fastidiosa, which are involved in bacterial twitching motility as component of the filamentous type IV pili (T4P). The twitching motility of this protein is enhanced by calcium, which may provide the bacterium an adaptive advantage in environments with high calcium concentrations. The protein is Type IV pilus biogenesis factor PilY1 homolog PD_1611 of Xylella fastidiosa (strain Temecula1 / ATCC 700964).